The sequence spans 112 residues: Replication initiation control protein YabA (112 aa).

Zn(2+) is bound by residues histidine 85, cysteine 87, cysteine 101, and cysteine 104.

It belongs to the YabA family. As to quaternary structure, homotetramer. Interacts with both DnaA and DnaN, acting as a bridge between these two proteins. The cofactor is Zn(2+).

It localises to the cytoplasm. The protein resides in the nucleoid. Its function is as follows. Involved in control of chromosome replication initiation. Inhibits the cooperative binding of DnaA to the oriC region, thus negatively regulating initiation of chromosome replication. Inhibits the ability of DnaA-ATP to form a helix on DNA; does not disassemble preformed DnaA-DNA helices. Decreases the residence time of DnaA on the chromosome at its binding sites (oriC, replication forks and promoter-binding sites). Tethers DnaA to the replication machinery via the DNA polymerase beta sliding clamp subunit (dnaN). Associates with oriC and other DnaA targets on the chromosome in a DnaA-dependent manner. The protein is Replication initiation control protein YabA of Lacticaseibacillus casei (strain BL23) (Lactobacillus casei).